Here is a 336-residue protein sequence, read N- to C-terminus: Palmitoyltransferase PFA3 (336 aa).

The Cytoplasmic portion of the chain corresponds to 1-6 (MNDRLS). The chain crosses the membrane as a helical span at residues 7–29 (LTSLFPRCLTTCLYIWTAYITLT). Topologically, residues 30-37 (RIHQIPRW) are vacuolar. The chain crosses the membrane as a helical span at residues 38-58 (FLALTIVPTLAVALYTYYKVI). Residues 59–147 (ARGPGSPLDF…AECTGFRNQK (89 aa)) lie on the Cytoplasmic side of the membrane. The 51-residue stretch at 104 to 154 (RVCQVCHVWKPDRCHHCSSCDVCILKMDHHCPWFAECTGFRNQKFFIQFLM) folds into the DHHC domain. A helical transmembrane segment spans residues 148–168 (FFIQFLMYTTLYAFLVLIYTC). Topologically, residues 169-188 (YELGTWFNSGSFNRELIDFH) are vacuolar. A helical transmembrane segment spans residues 189-209 (LLGVALLAVAVFISVLAFTCF). The Cytoplasmic portion of the chain corresponds to 210–336 (SIYQVCKNQT…RASVEIIDAN (127 aa)).

Belongs to the DHHC palmitoyltransferase family. PFA3 subfamily. Autopalmitoylated.

It is found in the vacuole membrane. It catalyses the reaction L-cysteinyl-[protein] + hexadecanoyl-CoA = S-hexadecanoyl-L-cysteinyl-[protein] + CoA. Its function is as follows. Palmitoyltransferase specific for VAC8. Palmitoylates VAC8 at one or more of its N-terminal cysteine residues, which is required for its proper membrane localization. This chain is Palmitoyltransferase PFA3 (PFA3), found in Saccharomyces cerevisiae (strain ATCC 204508 / S288c) (Baker's yeast).